An 815-amino-acid polypeptide reads, in one-letter code: SNF1 protein kinase subunit beta-1 (815 aa).

A compositionally biased stretch (polar residues) spans 1-11 (MGNSPSTQDPS). Disordered stretches follow at residues 1 to 88 (MGNS…TIDK) and 120 to 146 (HDVGAPEEQVKSPSFLSPGPSMATVKR). Residue G2 is the site of N-myristoyl glycine attachment. Over residues 12 to 31 (HSTKKEHGHHFHDAFNKDRQ) the composition is skewed to basic and acidic residues. Residues 32–42 (GSITSQLFNNR) are compositionally biased toward polar residues. Residue S33 is modified to Phosphoserine. Composition is skewed to basic and acidic residues over residues 72–88 (PSTDCDGRMSSDTTIDK) and 120–129 (HDVGAPEEQV). Residues S181, S198, S200, S206, S209, and S220 each carry the phosphoserine modification. Disordered regions lie at residues 311 to 335 (HANNNGNIENNTRNKGNAGGSNDDF), 363 to 389 (HHNKTKKAQSKKIRSASNSRRSSFASL), and 410 to 444 (PLHPIINDNESQYSAPQHREISHHSNSMSSMSSIS). The span at 313–326 (NNNGNIENNTRNKG) shows a compositional bias: low complexity. S331 carries the post-translational modification Phosphoserine. The segment covering 363 to 376 (HHNKTKKAQSKKIR) has biased composition (basic residues). 2 stretches are compositionally biased toward low complexity: residues 377–389 (SASNSRRSSFASL) and 433–444 (HSNSMSSMSSIS). The kinase-interacting sequence (KIS); required for interaction with SNF1 stretch occupies residues 473–716 (VSTDIASALK…LQQGGNIDAE (244 aa)). Phosphoserine occurs at positions 494 and 497. Residues 581–616 (EPTLDEELPKRPELKRFPSSSRKSSYYSAKGVERPS) are disordered. A compositionally biased stretch (basic and acidic residues) spans 587–596 (ELPKRPELKR). Low complexity predominate over residues 599-608 (SSSRKSSYYS). Position 643 is a phosphoserine (S643). Positions 724-804 (SRYPVPDLPI…FITQVVYAPC (81 aa)) are association with SNF1 kinase complex (ASC) domain; required for interaction with SNF4.

It belongs to the 5'-AMP-activated protein kinase beta subunit family. Component of the SNF1 kinase complex, a heterotrimeric complex composed of the catalytic alpha subunit SNF1, one of the three related beta subunits SIP1, SIP2 or GAL83, and the regulatory gamma subunit SNF4. The beta subunit serves as a bridge between the catalytic and the regulatory subunit. Interacts (via KIS domain) with SNF1. Interacts (via ASC domain) with SNF4. In terms of processing, phosphorylated by SNF1 in vitro.

The protein localises to the cytoplasm. It is found in the vacuole membrane. Its function is as follows. Beta subunit of the SNF1 kinase complex, which is required for transcriptional, metabolic, and developmental adaptations in response to glucose limitation. Has a structural role, mediating heterotrimer formation, and a regulatory role, defining carbon source-regulated subcellular location and substrate specificity of the SNF1 kinase complex. Promotes the PKA-regulated relocalization of the SNF1 kinase complex to the vacuolar membrane in response to various types of carbon stress. The polypeptide is SNF1 protein kinase subunit beta-1 (SIP1) (Saccharomyces cerevisiae (strain RM11-1a) (Baker's yeast)).